The sequence spans 121 residues: Small ribosomal subunit protein uS13 (121 aa).

The disordered stretch occupies residues 92–121; it reads RKGLPCRGQRTRTNARTRKGPRKAAQSLKK.

This sequence belongs to the universal ribosomal protein uS13 family. Part of the 30S ribosomal subunit. Forms a loose heterodimer with protein S19. Forms two bridges to the 50S subunit in the 70S ribosome.

Located at the top of the head of the 30S subunit, it contacts several helices of the 16S rRNA. In the 70S ribosome it contacts the 23S rRNA (bridge B1a) and protein L5 of the 50S subunit (bridge B1b), connecting the 2 subunits; these bridges are implicated in subunit movement. Contacts the tRNAs in the A and P-sites. This is Small ribosomal subunit protein uS13 from Janthinobacterium sp. (strain Marseille) (Minibacterium massiliensis).